The primary structure comprises 192 residues: Lipid A acyltransferase PagP (192 aa).

The first 24 residues, 1 to 24 (MWLRFCAPALMAWYWVFFPSTSQA), serve as a signal peptide directing secretion. Active-site residues include histidine 63, aspartate 106, and serine 107.

Belongs to the lipid A palmitoyltransferase family. In terms of assembly, homodimer.

The protein resides in the cell outer membrane. The catalysed reaction is a lipid A + a 1,2-diacyl-sn-glycero-3-phosphocholine = a hepta-acyl lipid A + a 2-acyl-sn-glycero-3-phosphocholine. It catalyses the reaction a lipid IVA + a 1,2-diacyl-sn-glycero-3-phosphocholine = a lipid IVB + a 2-acyl-sn-glycero-3-phosphocholine. The enzyme catalyses a lipid IIA + a 1,2-diacyl-sn-glycero-3-phosphocholine = a lipid IIB + a 2-acyl-sn-glycero-3-phosphocholine. Functionally, transfers a fatty acid residue from the sn-1 position of a phospholipid to the N-linked hydroxyfatty acid chain on the proximal unit of lipid A or its precursors. The protein is Lipid A acyltransferase PagP of Musicola paradisiaca (strain Ech703) (Dickeya paradisiaca).